Here is a 320-residue protein sequence, read N- to C-terminus: Acetyl-coenzyme A carboxylase carboxyl transferase subunit alpha (320 aa).

A CoA carboxyltransferase C-terminal domain is found at 33 to 294 (AFDGEIESLR…GDAVEEELKA (262 aa)).

It belongs to the AccA family. As to quaternary structure, acetyl-CoA carboxylase is a heterohexamer composed of biotin carboxyl carrier protein (AccB), biotin carboxylase (AccC) and two subunits each of ACCase subunit alpha (AccA) and ACCase subunit beta (AccD).

The protein localises to the cytoplasm. It catalyses the reaction N(6)-carboxybiotinyl-L-lysyl-[protein] + acetyl-CoA = N(6)-biotinyl-L-lysyl-[protein] + malonyl-CoA. It participates in lipid metabolism; malonyl-CoA biosynthesis; malonyl-CoA from acetyl-CoA: step 1/1. Component of the acetyl coenzyme A carboxylase (ACC) complex. First, biotin carboxylase catalyzes the carboxylation of biotin on its carrier protein (BCCP) and then the CO(2) group is transferred by the carboxyltransferase to acetyl-CoA to form malonyl-CoA. This Phenylobacterium zucineum (strain HLK1) protein is Acetyl-coenzyme A carboxylase carboxyl transferase subunit alpha.